We begin with the raw amino-acid sequence, 211 residues long: tRNA (guanine-N(7)-)-methyltransferase (211 aa).

Residues E43, D68, N95, and N117 each coordinate S-adenosyl-L-methionine. Residue K121 coordinates substrate. The segment at R123–R128 is interaction with RNA. Substrate-binding positions include D153 and T190 to E193.

The protein belongs to the class I-like SAM-binding methyltransferase superfamily. TrmB family.

The catalysed reaction is guanosine(46) in tRNA + S-adenosyl-L-methionine = N(7)-methylguanosine(46) in tRNA + S-adenosyl-L-homocysteine. It functions in the pathway tRNA modification; N(7)-methylguanine-tRNA biosynthesis. Its function is as follows. Catalyzes the formation of N(7)-methylguanine at position 46 (m7G46) in tRNA. This Clostridium tetani (strain Massachusetts / E88) protein is tRNA (guanine-N(7)-)-methyltransferase.